The primary structure comprises 198 residues: Lipid A 4'-phosphatase (198 aa).

A helical transmembrane segment spans residues 143–165 (AGQHTILQVTIGSLIAWGFAYLF).

This sequence belongs to the lipid A LpxF 4'-phosphatase family.

Its subcellular location is the cell inner membrane. The protein operates within bacterial outer membrane biogenesis; LPS lipid A biosynthesis. In terms of biological role, removes the 4'-phosphate group from tetra- and hexaacylated lipid A species, has no 1-phosphatase or Kdo hydrolase activity. Absence of the 4'-phosphate group renders the bacteria resistant to host-derived cationic antimicrobial peptides (CAMP), allowing it to camouflage itself from the host innate immune response, and plays a critical role in the long-term colonization of the host's stomach. The sequence is that of Lipid A 4'-phosphatase from Helicobacter pylori (strain J99 / ATCC 700824) (Campylobacter pylori J99).